We begin with the raw amino-acid sequence, 556 residues long: Chaperone protein HscC (556 aa).

This sequence belongs to the heat shock protein 70 family.

Functionally, probable chaperone. Has ATPase activity. Not stimulated by DnaJ. The chain is Chaperone protein HscC (hscC) from Escherichia coli (strain K12).